A 629-amino-acid chain; its full sequence is Pescadillo homolog (629 aa).

In terms of domain architecture, BRCT spans 321 to 414 (RLRTLFKGLK…QLLPTNKYFI (94 aa)). 3 disordered regions span residues 439 to 470 (KALL…ETVD), 488 to 568 (EYKK…MVKP), and 598 to 629 (IEAS…KLGK). Phosphoserine is present on residues serine 453 and serine 457. Composition is skewed to acidic residues over residues 454–470 (DEDS…ETVD) and 498–523 (VNED…EELD). Over residues 524–535 (EKSKRLQEEKQK) the composition is skewed to basic and acidic residues. Over residues 542 to 551 (KVHKVNKRQV) the composition is skewed to basic residues. Composition is skewed to basic and acidic residues over residues 552–561 (HKAEVDEHRL) and 598–617 (IEAS…RKEA). A coiled-coil region spans residues 584–627 (KEKEEWLLRKKRRTIEASEKEARKTAKREARKEAAAAAAKASKL). The span at 618 to 629 (AAAAAKASKLGK) shows a compositional bias: low complexity.

This sequence belongs to the pescadillo family.

It is found in the nucleus. The protein resides in the nucleolus. It localises to the nucleoplasm. Functionally, required for maturation of ribosomal RNAs and formation of the large ribosomal subunit. The protein is Pescadillo homolog of Drosophila erecta (Fruit fly).